Here is a 120-residue protein sequence, read N- to C-terminus: uncharacterized protein (120 aa).

The first 22 residues, 1–22 (MSTSGMLFIFATFCPCFLSCCA), serve as a signal peptide directing secretion. The Extracellular segment spans residues 23 to 59 (FMSHWKLKDFSFRFLRMCGERSLVVCYPLKLLKQIRS). Residues 60-80 (LFSIAIGHLSLMLIEGSANLL) form a helical membrane-spanning segment. Residues 81 to 120 (SLEEISRTLLRILDFVGNKNMRTYLEVPLCRWHISQARPN) are Cytoplasmic-facing.

It is found in the membrane. This is an uncharacterized protein from Schizosaccharomyces pombe (strain 972 / ATCC 24843) (Fission yeast).